Reading from the N-terminus, the 367-residue chain is uncharacterized protein (367 aa).

This sequence belongs to the Gfo/Idh/MocA family.

This is an uncharacterized protein from Streptococcus pneumoniae serotype 4 (strain ATCC BAA-334 / TIGR4).